Here is a 366-residue protein sequence, read N- to C-terminus: GTP-binding protein 10 (366 aa).

Residues 13-148 form the Obg domain; the sequence is GNFIDNLRIF…RIVHLDLKVI (136 aa). The OBG-type G domain occupies 149-344; the sequence is ADVGLVGFPN…LKSCIRKALD (196 aa). GTP contacts are provided by residues 155–162, 202–206, and 278–281; these read GFPNAGKS, DLPGL, and NKMD. Positions 346 to 355 are enriched in basic and acidic residues; the sequence is QDGKESDAHR. The segment at 346 to 366 is disordered; that stretch reads QDGKESDAHRSKQLLNLQSSS.

The protein belongs to the TRAFAC class OBG-HflX-like GTPase superfamily. OBG GTPase family.

The protein localises to the nucleus. It is found in the nucleolus. In terms of biological role, may be involved in the ribosome maturation process. This Mus musculus (Mouse) protein is GTP-binding protein 10 (Gtpbp10).